A 125-amino-acid chain; its full sequence is Class III hydrophobin G (125 aa).

The N-terminal stretch at 1-20 (MKPSIVTFLMLAAVTAAVSA) is a signal peptide. Cystine bridges form between C54–C107, C60–C101, C61–C94, and C108–C122.

It belongs to the fungal hydrophobin family. As to quaternary structure, self-assembles to form functional amyloid fibrils called rodlets. Self-assembly into fibrillar rodlets occurs spontaneously at hydrophobic:hydrophilic interfaces and the rodlets further associate laterally to form amphipathic monolayers.

The protein localises to the secreted. It is found in the cell wall. Its function is as follows. Aerial growth, conidiation, and dispersal of filamentous fungi in the environment rely upon a capability of their secreting small amphipathic proteins called hydrophobins (HPBs) with low sequence identity. Class I can self-assemble into an outermost layer of rodlet bundles on aerial cell surfaces, conferring cellular hydrophobicity that supports fungal growth, development and dispersal; whereas Class II form highly ordered films at water-air interfaces through intermolecular interactions but contribute nothing to the rodlet structure. RodF and rodG belong to Class III, which contains hydrophobins with intermediate (between classes I and II) or atypical characteristics. RodG, unlike rodA, is not required for rodlet formation. In Aspergillus fumigatus (strain ATCC MYA-4609 / CBS 101355 / FGSC A1100 / Af293) (Neosartorya fumigata), this protein is Class III hydrophobin G.